We begin with the raw amino-acid sequence, 369 residues long: Bi-functional coumaroyl CoA and feruloyl CoA ortho-hydroxylase Diox2 (369 aa).

The Fe2OG dioxygenase domain occupies Gly215 to Pro318. Position 224 (Tyr224) interacts with 2-oxoglutarate. Fe cation-binding residues include His239, Asp241, and His299. Arg309 and Ser311 together coordinate 2-oxoglutarate.

It belongs to the iron/ascorbate-dependent oxidoreductase family. L-ascorbate is required as a cofactor. Requires Fe(2+) as cofactor.

It catalyses the reaction (E)-4-coumaroyl-CoA + 2-oxoglutarate + O2 = (E)-2,4-dihydroxycinnamoyl-CoA + succinate + CO2. It carries out the reaction (E)-feruloyl-CoA + 2-oxoglutarate + O2 = (E)-6-hydroxyferuloyl-CoA + succinate + CO2. It participates in phenylpropanoid metabolism. In terms of biological role, 2-oxoglutarate (OG)- and Fe(II)-dependent dioxygenase (2OGD) involved in scopoletin and umbelliferone biosynthesis. Converts feruloyl CoA into 6'-hydroxyferuloyl CoA, and p-coumaroyl CoA into 2,4-dihydroxycinnamoyl-CoA. In Ruta graveolens (Common rue), this protein is Bi-functional coumaroyl CoA and feruloyl CoA ortho-hydroxylase Diox2.